Reading from the N-terminus, the 149-residue chain is 1,4-dihydroxy-2-naphthoyl-CoA hydrolase (149 aa).

The active site involves Asp-19.

It belongs to the 4-hydroxybenzoyl-CoA thioesterase family. DHNA-CoA hydrolase subfamily.

It catalyses the reaction 1,4-dihydroxy-2-naphthoyl-CoA + H2O = 1,4-dihydroxy-2-naphthoate + CoA + H(+). The protein operates within cofactor biosynthesis; phylloquinone biosynthesis. It functions in the pathway quinol/quinone metabolism; 1,4-dihydroxy-2-naphthoate biosynthesis; 1,4-dihydroxy-2-naphthoate from chorismate: step 7/7. Functionally, catalyzes the hydrolysis of 1,4-dihydroxy-2-naphthoyl-CoA (DHNA-CoA) to 1,4-dihydroxy-2-naphthoate (DHNA), a reaction involved in phylloquinone (vitamin K1) biosynthesis. The chain is 1,4-dihydroxy-2-naphthoyl-CoA hydrolase from Synechococcus sp. (strain CC9902).